The chain runs to 351 residues: Farnesyl pyrophosphate synthase (351 aa).

Isopentenyl diphosphate is bound by residues Lys51, Arg54, and Gln92. Asp99 and Asp103 together coordinate Mg(2+). Arg108 serves as a coordination point for dimethylallyl diphosphate. Arg109 provides a ligand contact to isopentenyl diphosphate. Dimethylallyl diphosphate is bound by residues Lys196, Thr197, Gln236, Lys253, and Lys262.

Belongs to the FPP/GGPP synthase family. Mg(2+) serves as cofactor.

The catalysed reaction is isopentenyl diphosphate + dimethylallyl diphosphate = (2E)-geranyl diphosphate + diphosphate. It catalyses the reaction isopentenyl diphosphate + (2E)-geranyl diphosphate = (2E,6E)-farnesyl diphosphate + diphosphate. It functions in the pathway isoprenoid biosynthesis; farnesyl diphosphate biosynthesis; farnesyl diphosphate from geranyl diphosphate and isopentenyl diphosphate: step 1/1. It participates in isoprenoid biosynthesis; geranyl diphosphate biosynthesis; geranyl diphosphate from dimethylallyl diphosphate and isopentenyl diphosphate: step 1/1. Its function is as follows. Farnesyl pyrophosphate synthase; part of the second module of ergosterol biosynthesis pathway that includes the middle steps of the pathway. ERG20 catalyzes the sequential condensation of isopentenyl pyrophosphate with dimethylallyl pyrophosphate, and then with the resultant geranylpyrophosphate to the ultimate product farnesyl pyrophosphate. The second module is carried out in the vacuole and involves the formation of farnesyl diphosphate, which is also an important intermediate in the biosynthesis of ubiquinone, dolichol, heme and prenylated proteins. Activity by the mevalonate kinase ERG12 first converts mevalonate into 5-phosphomevalonate. 5-phosphomevalonate is then further converted to 5-diphosphomevalonate by the phosphomevalonate kinase ERG8. The diphosphomevalonate decarboxylase MVD then produces isopentenyl diphosphate. The isopentenyl-diphosphate delta-isomerase IDI1 then catalyzes the 1,3-allylic rearrangement of the homoallylic substrate isopentenyl (IPP) to its highly electrophilic allylic isomer, dimethylallyl diphosphate (DMAPP). Finally the farnesyl diphosphate synthase ERG20 catalyzes the sequential condensation of isopentenyl pyrophosphate with dimethylallyl pyrophosphate, and then with the resultant geranylpyrophosphate to the ultimate product farnesyl pyrophosphate. This chain is Farnesyl pyrophosphate synthase, found in Candida albicans (strain SC5314 / ATCC MYA-2876) (Yeast).